A 156-amino-acid chain; its full sequence is Small ribosomal subunit protein uS7c (156 aa).

The protein belongs to the universal ribosomal protein uS7 family. Part of the 30S ribosomal subunit.

The protein resides in the plastid. Its subcellular location is the chloroplast. One of the primary rRNA binding proteins, it binds directly to 16S rRNA where it nucleates assembly of the head domain of the 30S subunit. In Tupiella akineta (Green alga), this protein is Small ribosomal subunit protein uS7c (rps7).